Here is a 175-residue protein sequence, read N- to C-terminus: S-fimbrial protein subunit SfaG (175 aa).

The N-terminal stretch at 1–27 (MVKDIIKTVTFSCMLAGSMFVTCHVCA) is a signal peptide. A disulfide bridge connects residues Cys-43 and Cys-83.

The protein belongs to the fimbrial protein family.

The protein localises to the fimbrium. Functionally, fimbriae (also called pili), polar filaments radiating from the surface of the bacterium to a length of 0.5-1.5 micrometers and numbering 100-300 per cell, enable bacteria to colonize the epithelium of specific host organs. Its function is as follows. A minor fimbrial subunit. This protein is necessary for full expression of S-specific binding. S-fimbrial adhesins enable pathogenic E.coli causing urinary-tract infections or newborn meningitis to attach to glycoproteins terminating with alpha-sialic acid-(2-3)-beta-Gal. The sequence is that of S-fimbrial protein subunit SfaG (sfaG) from Escherichia coli O6:K15:H31 (strain 536 / UPEC).